A 304-amino-acid chain; its full sequence is dTDP-4-dehydrorhamnose reductase (304 aa).

Residues 16 to 18 (GML), 42 to 43 (DI), and 66 to 68 (AWT) contribute to the NADH site. NADPH is bound by residues 17–18 (ML), 42–43 (DI), and 66–68 (AWT). 107–108 (TD) is a dTDP-beta-L-rhamnose binding site. Residues Tyr131 and Lys135 each coordinate NADH. 2 residues coordinate NADPH: Tyr131 and Lys135. The Proton donor/acceptor role is filled by Tyr131. Trp157 serves as a coordination point for dTDP-beta-L-rhamnose.

It belongs to the dTDP-4-dehydrorhamnose reductase family. In terms of assembly, homodimer. Mg(2+) serves as cofactor.

The enzyme catalyses dTDP-beta-L-rhamnose + NADP(+) = dTDP-4-dehydro-beta-L-rhamnose + NADPH + H(+). Its pathway is carbohydrate biosynthesis; dTDP-L-rhamnose biosynthesis. It participates in antibiotic biosynthesis; streptomycin biosynthesis. In terms of biological role, involved in the biosynthesis of the streptose moiety of streptomycin. Catalyzes the reduction of dTDP-6-deoxy-L-lyxo-4-hexulose to yield dTDP-L-rhamnose. RmlD uses NADH and NADPH nearly equally well. This is dTDP-4-dehydrorhamnose reductase from Streptomyces griseus.